A 203-amino-acid chain; its full sequence is E3 ubiquitin-protein ligase RNF152 (203 aa).

The RING-type zinc-finger motif lies at 12 to 55 (CQICFNYYSPRRRPKLLDCKHTCCSVCLQQMRTSQKDVRCPWCR). The tract at residues 106 to 165 (ISKERALLPGDMGCRLLPGSQQKSVTVVTVPAEQRPLQGGAPQEAVEEEPDRRGVAKSST) is necessary for interaction with RRAGA. The chain crosses the membrane as a helical span at residues 167-187 (SGVCTVILVACVLVFLLGIVL).

The protein belongs to the RNF152 family. In terms of assembly, interacts with RRAGA (inactive GDP-bound form); stimulated by amino acid starvation. Post-translationally, ubiquitinated. Autoubiquitinated in vitro, leading to its degradation by the proteasome.

It localises to the lysosome membrane. The enzyme catalyses S-ubiquitinyl-[E2 ubiquitin-conjugating enzyme]-L-cysteine + [acceptor protein]-L-lysine = [E2 ubiquitin-conjugating enzyme]-L-cysteine + N(6)-ubiquitinyl-[acceptor protein]-L-lysine.. Its pathway is protein modification; protein ubiquitination. Its function is as follows. E3 ubiquitin-protein ligase that acts as a negative regulator of mTORC1 signaling by mediating ubiquitination of RagA/RRAGA and RHEB. Catalyzes 'Lys-63'-linked polyubiquitination of RagA/RRAGA in response to amino acid starvation, thereby regulating mTORC1 signaling. Also mediates monoubiquitination of RHEB, promoting its association with the TSC-TBC complex and subsequent inhibition. Also mediates 'Lys-48'-linked polyubiquitination of target proteins and their subsequent targeting to the proteasome for degradation. Induces apoptosis when overexpressed. The sequence is that of E3 ubiquitin-protein ligase RNF152 from Ailuropoda melanoleuca (Giant panda).